The chain runs to 187 residues: Photosystem I assembly protein Ycf4 (187 aa).

2 consecutive transmembrane segments (helical) span residues 25–45 (YLWA…GISS) and 69–89 (MSFY…TVIW).

It belongs to the Ycf4 family.

Its subcellular location is the cellular thylakoid membrane. Its function is as follows. Seems to be required for the assembly of the photosystem I complex. The chain is Photosystem I assembly protein Ycf4 from Trichodesmium erythraeum (strain IMS101).